Reading from the N-terminus, the 228-residue chain is Ribosomal RNA small subunit methyltransferase G (228 aa).

S-adenosyl-L-methionine contacts are provided by residues Gly-89, Leu-94, 140–141 (VE), and Arg-159.

This sequence belongs to the methyltransferase superfamily. RNA methyltransferase RsmG family.

The protein localises to the cytoplasm. The catalysed reaction is guanosine(527) in 16S rRNA + S-adenosyl-L-methionine = N(7)-methylguanosine(527) in 16S rRNA + S-adenosyl-L-homocysteine. Its function is as follows. Specifically methylates the N7 position of guanine in position 527 of 16S rRNA. This is Ribosomal RNA small subunit methyltransferase G from Burkholderia lata (strain ATCC 17760 / DSM 23089 / LMG 22485 / NCIMB 9086 / R18194 / 383).